A 213-amino-acid chain; its full sequence is Thymidylate kinase (213 aa).

G10–T17 provides a ligand contact to ATP.

The protein belongs to the thymidylate kinase family.

The catalysed reaction is dTMP + ATP = dTDP + ADP. Functionally, phosphorylation of dTMP to form dTDP in both de novo and salvage pathways of dTTP synthesis. This Enterobacter sp. (strain 638) protein is Thymidylate kinase.